The chain runs to 334 residues: MLDDRAKLLLKALIERYIADGQPVGSRTLSRSSGLDLSPATIRNVMADLEDIGLIASPHTSAGRIPTAKGYRLFVDTMLTVQRGELCSPELAPDQPQKVIANAAQLLSSLSQFVGVVMAPRRPSVFRHIEFLRLSERRLLVIIVSPDGDVQNRVIFTEVDHSQSQLAEAANFLNSHYSGLGMEEVRERLKTEVDQLRGEIASLMQAAVNVGSEAMAASQEEVVISGERNLLALSDFSNDMGNLRKAFDLFEQKTQILRLLDVSNRAEGVRIFIGGESQVVPFEELSVVSAPYEVDGQVVGTLGVIGPTRMPYDRMIQIVDITSKLVTNALSHRR.

Belongs to the HrcA family.

In terms of biological role, negative regulator of class I heat shock genes (grpE-dnaK-dnaJ and groELS operons). Prevents heat-shock induction of these operons. This Paracidovorax citrulli (strain AAC00-1) (Acidovorax citrulli) protein is Heat-inducible transcription repressor HrcA.